We begin with the raw amino-acid sequence, 180 residues long: Transcription factor IBH1-like 1 (180 aa).

The bHLH domain occupies 110-160 (KSKSASEEAAAKAKRLVKRRTQGLRNVVPGGELMSNDVLLLQETLDYIVSL).

This sequence belongs to the bHLH protein family.

Its subcellular location is the nucleus. Functions redundandly with IBH1/BHLH158 in a regulation node known as the incoherent feed-forward loop (FFL). Acts as transcriptional repressor that negatively regulates cell and organ elongation in response to gibberellin (GA) and brassinosteroid (BR) signaling. The protein is Transcription factor IBH1-like 1 of Arabidopsis thaliana (Mouse-ear cress).